A 148-amino-acid polypeptide reads, in one-letter code: uncharacterized protein (148 aa).

This is an uncharacterized protein from Methanothermobacter thermautotrophicus (Methanobacterium thermoformicicum).